The following is a 639-amino-acid chain: CTTNBP2 N-terminal-like protein (639 aa).

Residues 87 to 285 are a coiled coil; sequence MKQCKNMQER…DLEASHQHSS (199 aa). Phosphoserine is present on residues S284 and S285. Disordered regions lie at residues 387 to 430, 463 to 490, and 511 to 609; these read VENG…PCSS, RHKF…LSPT, and RFTS…AASL. 2 stretches are compositionally biased toward low complexity: residues 405–430 and 467–477; these read PLSS…PCSS and QSQADQDQQAS. Residues S481, S488, S523, S527, S560, S563, and S568 each carry the phosphoserine modification. Residues 511-529 are compositionally biased toward polar residues; it reads RFTSQQGPIKPVSPNSSPF. A phosphothreonine mark is found at T570 and T590. Low complexity predominate over residues 587-600; that stretch reads PGLTPSPSATTPLT. S592 is subject to Phosphoserine.

As to quaternary structure, interacts with CTTN/cortactin; this interaction may redistribute CTTN to stress fibers. May form homomers. Associates with the core of STRIPAK complexes composed of PP2A catalytic and scaffolding subunits, the striatins (PP2A regulatory subunits), the striatin-associated proteins MOB4, STRIP1 and STRIP2, PDCD10 and members of the STE20 kinases, such as STK24 and STK26.

Its subcellular location is the cell projection. It is found in the lamellipodium. The protein localises to the cytoplasm. The protein resides in the cytoskeleton. It localises to the stress fiber. In terms of biological role, regulates lamellipodial actin dynamics in a CTTN-dependent manner. Associates with core striatin-interacting phosphatase and kinase (STRIPAK) complex to form CTTNBP2NL-STRIPAK complexes. STRIPAK complexes have critical roles in protein (de)phosphorylation and are regulators of multiple signaling pathways including Hippo, MAPK, nuclear receptor and cytoskeleton remodeling. Different types of STRIPAK complexes are involved in a variety of biological processes such as cell growth, differentiation, apoptosis, metabolism and immune regulation. This chain is CTTNBP2 N-terminal-like protein, found in Homo sapiens (Human).